The primary structure comprises 115 residues: UPF0738 protein SAB0871 (115 aa).

Belongs to the UPF0738 family.

The sequence is that of UPF0738 protein SAB0871 from Staphylococcus aureus (strain bovine RF122 / ET3-1).